Reading from the N-terminus, the 385-residue chain is Cytochrome b (385 aa).

The next 4 membrane-spanning stretches (helical) occupy residues 32-52, 76-98, 113-133, and 179-199; these read MGSLLGLCLVIQIVTGIFMAM, YILRYLHANGASFFFMVMFMHMA, LWNVGVIIFILTIATAFLGYC, and FFALHYLVPFIIAAMVIMHLM. Residues His-82 and His-96 each coordinate heme b. Heme b is bound by residues His-183 and His-197. An a ubiquinone-binding site is contributed by His-202. 4 helical membrane-spanning segments follow: residues 225-245, 289-309, 321-341, and 348-368; these read FIFKDLVTVFLFMLILALFVF, LLGVITMFAAILVLLVLPFTD, LSKFFFFIFVFNFVLLGQIGA, and YVLMGQIATFIYFAYFLIIVP.

The protein belongs to the cytochrome b family. In terms of assembly, fungal cytochrome b-c1 complex contains 10 subunits; 3 respiratory subunits, 2 core proteins and 5 low-molecular weight proteins. Cytochrome b-c1 complex is a homodimer. Heme b is required as a cofactor.

It localises to the mitochondrion inner membrane. Component of the ubiquinol-cytochrome c reductase complex (complex III or cytochrome b-c1 complex) that is part of the mitochondrial respiratory chain. The b-c1 complex mediates electron transfer from ubiquinol to cytochrome c. Contributes to the generation of a proton gradient across the mitochondrial membrane that is then used for ATP synthesis. The chain is Cytochrome b (COB) from Saccharomyces paradoxus (Yeast).